Here is a 242-residue protein sequence, read N- to C-terminus: MHLTVFYLVALCTFASADDQPRYIINKLPYEQIKPFPAVEPDCRINEIALQFQPQLHISSGCHPYPAVDKNGYISTGLGVSHVFTDCDGSPEGSQVYGRAYVYKGYLAIMYAWYFPRDYMVSPVWIGHRNAWEHAVLWLGGLTEDPELLAVAAKSMWGYRTYAPPKSKYMKDDSFKLEYSWMVMSHHYLTATKDPGEFQDLIMWNNMTERARESLRLKSSSHFKSPLSDDRFFRALRKSYPF.

Positions 1–17 (MHLTVFYLVALCTFASA) are cleaved as a signal peptide. Residues 108–118 (AIMYAWYFPRD) carry the Conserved undecapeptide motif motif. The short motif at 127-133 (GHRNAWE) is the Conserved heptapeptide motif element. Asn206 carries N-linked (GlcNAc...) asparagine glycosylation.

This sequence belongs to the Necrosis inducing protein (NPP1) family.

Its subcellular location is the secreted. Its function is as follows. Probable secreted effector that may act as a pathogen-associated molecular pattern (PAMP) recognized by the plant immune system. The polypeptide is NLP effector protein 8 (Plasmopara viticola (Downy mildew of grapevine)).